We begin with the raw amino-acid sequence, 219 residues long: Thiamine-phosphate synthase (219 aa).

4-amino-2-methyl-5-(diphosphooxymethyl)pyrimidine contacts are provided by residues Gln48–Lys52 and Asn84. Mg(2+) is bound by residues Asp85 and Asp104. Residue Ser123 coordinates 4-amino-2-methyl-5-(diphosphooxymethyl)pyrimidine. Position 150–152 (Thr150–Ser152) interacts with 2-[(2R,5Z)-2-carboxy-4-methylthiazol-5(2H)-ylidene]ethyl phosphate. Lys153 is a 4-amino-2-methyl-5-(diphosphooxymethyl)pyrimidine binding site. 2-[(2R,5Z)-2-carboxy-4-methylthiazol-5(2H)-ylidene]ethyl phosphate-binding positions include Gly181 and Ile199 to Ser200.

This sequence belongs to the thiamine-phosphate synthase family. Mg(2+) is required as a cofactor.

It catalyses the reaction 2-[(2R,5Z)-2-carboxy-4-methylthiazol-5(2H)-ylidene]ethyl phosphate + 4-amino-2-methyl-5-(diphosphooxymethyl)pyrimidine + 2 H(+) = thiamine phosphate + CO2 + diphosphate. The catalysed reaction is 2-(2-carboxy-4-methylthiazol-5-yl)ethyl phosphate + 4-amino-2-methyl-5-(diphosphooxymethyl)pyrimidine + 2 H(+) = thiamine phosphate + CO2 + diphosphate. The enzyme catalyses 4-methyl-5-(2-phosphooxyethyl)-thiazole + 4-amino-2-methyl-5-(diphosphooxymethyl)pyrimidine + H(+) = thiamine phosphate + diphosphate. It functions in the pathway cofactor biosynthesis; thiamine diphosphate biosynthesis; thiamine phosphate from 4-amino-2-methyl-5-diphosphomethylpyrimidine and 4-methyl-5-(2-phosphoethyl)-thiazole: step 1/1. In terms of biological role, condenses 4-methyl-5-(beta-hydroxyethyl)thiazole monophosphate (THZ-P) and 2-methyl-4-amino-5-hydroxymethyl pyrimidine pyrophosphate (HMP-PP) to form thiamine monophosphate (TMP). The sequence is that of Thiamine-phosphate synthase from Helicobacter pylori (strain HPAG1).